The primary structure comprises 276 residues: Protease HtpX homolog (276 aa).

Residues 14 to 34 (IVLFALIGQALGGTGGMLLAF) form a helical membrane-spanning segment. A Zn(2+)-binding site is contributed by His130. Residue Glu131 is part of the active site. A Zn(2+)-binding site is contributed by His134. 2 consecutive transmembrane segments (helical) span residues 145 to 165 (VAAT…FFGG) and 171 to 191 (LVSL…QSAI). Residue Glu196 participates in Zn(2+) binding.

It belongs to the peptidase M48B family. Zn(2+) serves as cofactor.

The protein localises to the cell inner membrane. In Salinibacter ruber (strain DSM 13855 / M31), this protein is Protease HtpX homolog.